Here is a 717-residue protein sequence, read N- to C-terminus: Homeobox protein araucan (717 aa).

Disordered stretches follow at residues Ala-46–Leu-80, Gly-94–Gly-130, Asn-317–Glu-371, Ser-395–Gln-418, Thr-478–Asp-516, Thr-549–Arg-615, and Ala-675–Asn-717. A compositionally biased stretch (gly residues) spans Gly-94 to Pro-103. The homeobox; TALE-type DNA-binding region spans Leu-255–Asn-317. A compositionally biased stretch (basic and acidic residues) spans Asn-317–Thr-327. At Ser-336 the chain carries Phosphoserine. Over residues Asp-337–Pro-347 the composition is skewed to basic and acidic residues. The span at Ser-395–Gly-410 shows a compositional bias: gly residues. Low complexity-rich tracts occupy residues Gln-492–Gln-507, Pro-559–Ile-589, Gln-599–Gln-614, and Ser-687–Ser-698.

The protein belongs to the TALE/IRO homeobox family.

The protein resides in the nucleus. Controls proneural and vein forming genes. Positive transcriptional controller of AC-SC (achaete-scute). May act as an activator that interacts with the transcriptional complex assembled on the AC and SC promoters and participates in transcription initiation. The chain is Homeobox protein araucan (ara) from Drosophila melanogaster (Fruit fly).